The primary structure comprises 307 residues: Metapyrocatechase (307 aa).

VOC domains lie at 7-122 (RPGH…LYAD) and 150-269 (RFDH…VFCG). Fe cation is bound by residues His153, His214, and Glu265.

The protein belongs to the extradiol ring-cleavage dioxygenase family. As to quaternary structure, homotetramer. It depends on Fe(2+) as a cofactor.

The enzyme catalyses catechol + O2 = (2Z,4E)-2-hydroxy-6-oxohexa-2,4-dienoate + H(+). The protein operates within xenobiotic degradation; toluene degradation. The sequence is that of Metapyrocatechase (xylE) from Pseudomonas putida (Arthrobacter siderocapsulatus).